Here is a 1071-residue protein sequence, read N- to C-terminus: Kinesin-like protein KIN-14J (1071 aa).

In terms of domain architecture, Calponin-homology (CH) spans 39–142; sequence KKGHQSLVEW…SLKALKASFS (104 aa). Positions 157-181 are disordered; the sequence is WSLPEDHSDSRGDDRNFTDGFQSKE. Over residues 158–173 the composition is skewed to basic and acidic residues; the sequence is SLPEDHSDSRGDDRNF. The stretch at 299-389 forms a coiled coil; it reads EKTRIEEKER…ELEKLCQSKS (91 aa). A Kinesin motor domain is found at 472 to 800; sequence NIRVYCRIRP…LKFAERVSGV (329 aa). 556–563 contacts ATP; sequence GQTGSGKT. A coiled-coil region spans residues 811–844; the sequence is GRDVRQLMEQVSNLKDVIAKKDEELQNFQKVKGN. 2 disordered regions span residues 852–931 and 995–1071; these read GLSN…AAKG and ARMT…NRRR. 2 stretches are compositionally biased toward basic and acidic residues: residues 910–921 and 995–1017; these read SDERKHQKDYHQ and ARMTSEKLEKSVKMGKTEPKDRT. Positions 1034–1049 are enriched in polar residues; sequence TRPSRLSIATSSSSKA.

It belongs to the TRAFAC class myosin-kinesin ATPase superfamily. Kinesin family. KIN-14 subfamily.

This Arabidopsis thaliana (Mouse-ear cress) protein is Kinesin-like protein KIN-14J.